We begin with the raw amino-acid sequence, 498 residues long: ATP synthase subunit beta, chloroplastic (498 aa).

172-179 (GGAGVGKT) serves as a coordination point for ATP.

It belongs to the ATPase alpha/beta chains family. F-type ATPases have 2 components, CF(1) - the catalytic core - and CF(0) - the membrane proton channel. CF(1) has five subunits: alpha(3), beta(3), gamma(1), delta(1), epsilon(1). CF(0) has four main subunits: a(1), b(1), b'(1) and c(9-12).

The protein localises to the plastid. Its subcellular location is the chloroplast thylakoid membrane. The catalysed reaction is ATP + H2O + 4 H(+)(in) = ADP + phosphate + 5 H(+)(out). Produces ATP from ADP in the presence of a proton gradient across the membrane. The catalytic sites are hosted primarily by the beta subunits. The chain is ATP synthase subunit beta, chloroplastic from Myristica fragrans (Nutmeg).